Reading from the N-terminus, the 347-residue chain is NADH-quinone oxidoreductase subunit H (347 aa).

8 helical membrane passes run 13 to 33 (LLIL…VAYI), 82 to 102 (GVFL…WAVI), 115 to 135 (VGIL…IMGG), 161 to 181 (IGFV…SDIV), 198 to 218 (FLDW…ISAL), 248 to 268 (FLLF…LATI), 283 to 303 (FTWV…FFGI), and 321 to 341 (LGWK…AAFL).

It belongs to the complex I subunit 1 family. As to quaternary structure, NDH-1 is composed of 14 different subunits. Subunits NuoA, H, J, K, L, M, N constitute the membrane sector of the complex.

Its subcellular location is the cell inner membrane. The catalysed reaction is a quinone + NADH + 5 H(+)(in) = a quinol + NAD(+) + 4 H(+)(out). Functionally, NDH-1 shuttles electrons from NADH, via FMN and iron-sulfur (Fe-S) centers, to quinones in the respiratory chain. The immediate electron acceptor for the enzyme in this species is believed to be ubiquinone. Couples the redox reaction to proton translocation (for every two electrons transferred, four hydrogen ions are translocated across the cytoplasmic membrane), and thus conserves the redox energy in a proton gradient. This subunit may bind ubiquinone. This Mesorhizobium japonicum (strain LMG 29417 / CECT 9101 / MAFF 303099) (Mesorhizobium loti (strain MAFF 303099)) protein is NADH-quinone oxidoreductase subunit H.